The following is a 336-amino-acid chain: Prenytransferase ascA (336 aa).

The interval 1–26 is disordered; that stretch reads MAAKSRSPKRGTSEKTPLVEKEAPYQ. Residues 11–23 show a composition bias toward basic and acidic residues; sequence GTSEKTPLVEKEA. 8 helical membrane-spanning segments follow: residues 52-72, 74-94, 131-151, 179-199, 206-226, 251-271, 272-292, and 314-334; these read PHGNYMIYFPHIIGLMYASAI, PTELSVLGHRAAIFAIWTFLM, GHVFTLILTLLGFAAIQSLPI, VILGSTLASTIALSAYSVGLP, FVPTLCLSATIMLLVVFYDVV, LEGLFAFITLSIAGSLTTLGY, LVGMGHWFYLFSVGGLTFGLV, and FAILNLLTGFIMEYATKDYVV.

The protein belongs to the UbiA prenyltransferase family. Requires Mg(2+) as cofactor.

Its subcellular location is the membrane. It carries out the reaction orsellinate + (2E,6E)-farnesyl diphosphate = ilicicolinate B + diphosphate. Its pathway is secondary metabolite biosynthesis; terpenoid biosynthesis. Its function is as follows. Prenytransferase; part of the asc-1 gene cluster that mediates the biosynthesis of both ascochlorin and ascofuranone, a strong inhibitor of cyanide-insensitive alternative oxidases and a promising drug candidate against African trypanosomiasis. The first step in the pathway is performed by the non-reducing polyketide synthase ascC that produces orsellinic acid by condensing acetyl-CoA with 3 malonyl-CoA units. Orsellinic acid is then prenylated by the prenyltransferase ascA to yield ilicicolinic acid B. Ilicicolinic acid B is further reduced to ilicicolin B by the reductase ascB. The halogenase ascD then chlorinates ilicicolin B to produce ilicicolin A which is converted to ilicicolin A epoxide by the cytochrome P450 monooxygenase ascE that catalyzes stereoselective epoxidation of the terminal double bond of the prenyl group. Ilicicolin A epoxide is the last common precursor for the biosynthesis of ascofuranone and ascochlorin. The terpene cyclase ascF produces a monocyclic terpene, and the cyclization reaction is proposed to be initiated by protonation of the terminal epoxide of ilicicolin A epoxide to generate a monocyclic tertiarycation, which is followed by a series of hydride and methyl shifts with abstraction of proton, leading to the formation of the (14S,15R,19R)-trimethylcyclohexanone ring structure of ilicicolin C, which is finally reduced to ascochlorin by the dehydrogenase ascG. On the other hand, ilicicolin A epoxide is hydroxylated by the cytochrome P450 monooxygenase ascH, and the resultant product is cyclized by the terpene cyclase ascI to ascofuranol via protonation-initiated epoxide ring opening, which facilitates the 6-endo-tet cyclization to form the tetrahy-drofuran ring. Finally, ascofuranol is oxidized into ascofuranone by ascJ. This Acremonium egyptiacum (Oospora egyptiaca) protein is Prenytransferase ascA.